The chain runs to 361 residues: GTPase Obg (361 aa).

The region spanning 1–159 (MKFVDEAFID…KNLKLELKVL (159 aa)) is the Obg domain. The region spanning 160 to 334 (ADVGLLGMPN…LIKTIYQHVK (175 aa)) is the OBG-type G domain. GTP contacts are provided by residues 166–173 (GMPNAGKS), 191–195 (FTTLH), 213–216 (DLPG), 284–287 (NKLD), and 315–317 (SAL). 2 residues coordinate Mg(2+): serine 173 and threonine 193. The segment at 339–361 (SEQPVEEVDPRFVPLPPESPETP) is disordered. Residues 351-361 (VPLPPESPETP) show a composition bias toward pro residues.

This sequence belongs to the TRAFAC class OBG-HflX-like GTPase superfamily. OBG GTPase family. As to quaternary structure, monomer. Mg(2+) serves as cofactor.

The protein localises to the cytoplasm. Functionally, an essential GTPase which binds GTP, GDP and possibly (p)ppGpp with moderate affinity, with high nucleotide exchange rates and a fairly low GTP hydrolysis rate. Plays a role in control of the cell cycle, stress response, ribosome biogenesis and in those bacteria that undergo differentiation, in morphogenesis control. In Polaromonas sp. (strain JS666 / ATCC BAA-500), this protein is GTPase Obg.